Reading from the N-terminus, the 331-residue chain is CRISPR-associated endonuclease Cas1 (331 aa).

Positions 166, 228, and 243 each coordinate Mn(2+).

This sequence belongs to the CRISPR-associated endonuclease Cas1 family. Homodimer, forms a heterotetramer with a Cas2 homodimer. Mg(2+) is required as a cofactor. Mn(2+) serves as cofactor.

Its function is as follows. CRISPR (clustered regularly interspaced short palindromic repeat), is an adaptive immune system that provides protection against mobile genetic elements (viruses, transposable elements and conjugative plasmids). CRISPR clusters contain spacers, sequences complementary to antecedent mobile elements, and target invading nucleic acids. CRISPR clusters are transcribed and processed into CRISPR RNA (crRNA). Acts as a dsDNA endonuclease. Involved in the integration of spacer DNA into the CRISPR cassette. This Hyperthermus butylicus (strain DSM 5456 / JCM 9403 / PLM1-5) protein is CRISPR-associated endonuclease Cas1.